Consider the following 1004-residue polypeptide: uncharacterized protein (1004 aa).

Asn27 is a glycosylation site (N-linked (GlcNAc...) asparagine). Transmembrane regions (helical) follow at residues 38-58 (FGFSLNPVLWCLDHQQGLLAI), 77-97 (IVPDCSTIVHIALCAAYLIVI), 188-208 (LSPVVSVQIHPKDLGVILIAY), and 324-344 (FILMLGGLPKEAPVKGISLFS). 3 N-linked (GlcNAc...) asparagine glycosylation sites follow: Asn392, Asn418, and Asn421. The next 2 membrane-spanning stretches (helical) occupy residues 422–442 (MSLSIPPSLCFLASDFRVIAF) and 599–619 (MSNIGFVCIGYQDGGITIIDM). An N-linked (GlcNAc...) asparagine glycan is attached at Asn627. A run of 2 helical transmembrane segments spans residues 726–746 (GYPLPQEVFLVYIGDSGISVF) and 823–843 (GDYIFPTLGAHELAFGCVLGS). N-linked (GlcNAc...) asparagine glycosylation occurs at Asn859.

To yeast YPR031w.

It localises to the membrane. This is an uncharacterized protein from Schizosaccharomyces pombe (strain 972 / ATCC 24843) (Fission yeast).